The chain runs to 446 residues: Tol-Pal system protein TolB (446 aa).

The first 19 residues, 1–19 (MLLRYLFILFIIIPIKAFA), serve as a signal peptide directing secretion.

This sequence belongs to the TolB family. In terms of assembly, the Tol-Pal system is composed of five core proteins: the inner membrane proteins TolA, TolQ and TolR, the periplasmic protein TolB and the outer membrane protein Pal. They form a network linking the inner and outer membranes and the peptidoglycan layer.

The protein localises to the periplasm. Functionally, part of the Tol-Pal system, which plays a role in outer membrane invagination during cell division and is important for maintaining outer membrane integrity. In Pelagibacter ubique (strain HTCC1062), this protein is Tol-Pal system protein TolB.